The chain runs to 817 residues: LPS-assembly protein LptD (817 aa).

The first 45 residues, 1 to 45 (MDRLPLPHALHVPTHRPFAAPLPPRRLLARLAALMLCGVPLAVLA), serve as a signal peptide directing secretion.

It belongs to the LptD family. As to quaternary structure, component of the lipopolysaccharide transport and assembly complex. Interacts with LptE and LptA.

The protein localises to the cell outer membrane. Functionally, together with LptE, is involved in the assembly of lipopolysaccharide (LPS) at the surface of the outer membrane. The protein is LPS-assembly protein LptD of Acidovorax sp. (strain JS42).